A 392-amino-acid chain; its full sequence is Pyoverdine export membrane fusion protein PvdR (392 aa).

A signal peptide (tat-type signal) is located at residues 1–36 (MRRSTHTRRRLLLGGLGLLGLGSLLAWTSLPFGAQP). Residues 109 to 181 (IDNLKAQLAE…NASLRSDEAE (73 aa)) adopt a coiled-coil conformation. The tract at residues 267-286 (PPKPLDQTSQGGGSPASATA) is disordered.

It belongs to the membrane fusion protein (MFP) (TC 8.A.1) family. In terms of assembly, part of the tripartite efflux system PvdRT-OpmQ, which is composed of an inner membrane component with both ATPase and permease domains, PvdT, a periplasmic membrane fusion protein, PvdR, and an outer membrane component, OpmQ. Post-translationally, predicted to be exported by the Tat system. The position of the signal peptide cleavage has not been experimentally proven.

The protein resides in the periplasm. In terms of biological role, part of the tripartite efflux system PvdRT-OpmQ required for the secretion into the extracellular milieu of the siderophore pyoverdine (PVD), which is involved in iron acquisition. This subunit is an adapter protein that stimulates the ATPase activity of PvdT and connects the inner and outer membrane components. The system is responsible for export of newly synthesized PVD after the final steps of biosynthesis have taken place in the periplasm. It is also responsible for recycling of PVD after internalization of ferri-PVD into the periplasm by the outer-membrane receptor FpvA and release of iron from PVD, thus making PVD available for new cycles of iron uptake. Contributes to resistance against ampicillin. The sequence is that of Pyoverdine export membrane fusion protein PvdR from Pseudomonas putida (strain ATCC 47054 / DSM 6125 / CFBP 8728 / NCIMB 11950 / KT2440).